The chain runs to 413 residues: Extracellular sucrase (413 aa).

D44 serves as the catalytic Nucleophile. E276 (proton donor/acceptor) is an active-site residue.

The protein belongs to the glycosyl hydrolase 68 family.

The protein localises to the secreted. It carries out the reaction Hydrolysis of terminal non-reducing beta-D-fructofuranoside residues in beta-D-fructofuranosides.. The protein is Extracellular sucrase (sacC) of Zymomonas mobilis subsp. mobilis (strain ATCC 10988 / DSM 424 / LMG 404 / NCIMB 8938 / NRRL B-806 / ZM1).